A 220-amino-acid chain; its full sequence is Cytidylate kinase (220 aa).

Residue 10 to 18 participates in ATP binding; sequence GPASSGKST.

It belongs to the cytidylate kinase family. Type 1 subfamily.

The protein resides in the cytoplasm. The catalysed reaction is CMP + ATP = CDP + ADP. The enzyme catalyses dCMP + ATP = dCDP + ADP. This chain is Cytidylate kinase, found in Lactococcus lactis subsp. cremoris (strain SK11).